Reading from the N-terminus, the 230-residue chain is Demethylluteothin O-methyltransferase (230 aa).

It belongs to the methyltransferase superfamily.

The catalysed reaction is demethylluteothin + S-adenosyl-L-methionine = luteothin + S-adenosyl-L-homocysteine. The protein operates within antibiotic biosynthesis. It functions in the pathway polyketide biosynthesis. Methyltransferase involved in the biosynthesis of the antibiotic aureothin, a nitroaryl polyketide metabolite with antifungal, cytotoxic and insecticidal activities. Catalyzes the methylation of demethylluteothin to luteothin (also called deoxyaureothin). Is specific for its gamma-pyrone substrate, and does not act on the alpha-pyrone isomer. The chain is Demethylluteothin O-methyltransferase from Streptomyces thioluteus.